Reading from the N-terminus, the 189-residue chain is Large ribosomal subunit protein bL9 (189 aa).

It belongs to the bacterial ribosomal protein bL9 family.

Binds to the 23S rRNA. The protein is Large ribosomal subunit protein bL9 of Brucella anthropi (strain ATCC 49188 / DSM 6882 / CCUG 24695 / JCM 21032 / LMG 3331 / NBRC 15819 / NCTC 12168 / Alc 37) (Ochrobactrum anthropi).